A 629-amino-acid polypeptide reads, in one-letter code: ATP-dependent RNA helicase DeaD (629 aa).

The short motif at 6–34 (TTFADLGLKAPILEALNDLGYEKPSPIQA) is the Q motif element. The region spanning 37-208 (IPHLLNGRDV…RRFMKEPQEV (172 aa)) is the Helicase ATP-binding domain. 50 to 57 (AQTGSGKT) serves as a coordination point for ATP. The DEAD box motif lies at 156-159 (DEAD). Positions 232 to 379 (KNEALVRFLE…EVELPNAELL (148 aa)) constitute a Helicase C-terminal domain. Disordered stretches follow at residues 438-481 (LIVP…RERR) and 560-629 (LGDA…GGDA). 2 stretches are compositionally biased toward basic and acidic residues: residues 446-481 (MRPKREFRDRDDRGPRDRNDRGPRGDREDRPRRERR) and 568-629 (GGER…GGDA).

This sequence belongs to the DEAD box helicase family. DeaD/CsdA subfamily. Interacts with the 50S ribosomal subunit upon shifting to 15 degrees Celsius. Also found associated with the RNA degradosome at 15 degrees Celsius; binds RNase E (rne).

The protein resides in the cytoplasm. The enzyme catalyses ATP + H2O = ADP + phosphate + H(+). Functionally, DEAD-box RNA helicase involved in various cellular processes at low temperature, including ribosome biogenesis, mRNA degradation and translation initiation. Exhibits RNA-stimulated ATP hydrolysis and RNA unwinding activity at low temperature. Involved in 50S ribosomal subunit assembly, acting after SrmB, and could also play a role in the biogenesis of the 30S ribosomal subunit. In addition, is involved in mRNA decay, via formation of a cold-shock degradosome with RNase E. Also stimulates translation of some mRNAs, probably at the level of initiation. The chain is ATP-dependent RNA helicase DeaD from Escherichia coli (strain K12).